Here is a 156-residue protein sequence, read N- to C-terminus: Transcription antitermination protein NusB (156 aa).

It belongs to the NusB family.

In terms of biological role, involved in transcription antitermination. Required for transcription of ribosomal RNA (rRNA) genes. Binds specifically to the boxA antiterminator sequence of the ribosomal RNA (rrn) operons. The polypeptide is Transcription antitermination protein NusB (Rickettsia massiliae (strain Mtu5)).